A 103-amino-acid polypeptide reads, in one-letter code: MYAVFQSGGKQHRVAEGQIVRLEKLNVETGATIDFNEVLMVAAGDTFKVGAPFVEGGKVVAEVVAHGRGEKVTIVKFRRRKHHRKQAGHRQWFTEVKITGISA.

It belongs to the bacterial ribosomal protein bL21 family. In terms of assembly, part of the 50S ribosomal subunit. Contacts protein L20.

Its function is as follows. This protein binds to 23S rRNA in the presence of protein L20. The polypeptide is Large ribosomal subunit protein bL21 (Aeromonas hydrophila subsp. hydrophila (strain ATCC 7966 / DSM 30187 / BCRC 13018 / CCUG 14551 / JCM 1027 / KCTC 2358 / NCIMB 9240 / NCTC 8049)).